Reading from the N-terminus, the 1355-residue chain is Collagen alpha-2(I) chain (1355 aa).

The signal sequence occupies residues 1–22; that stretch reads MLSFVDLRSVLLLAVTLYLVTC. Position 23 is a pyrrolidone carboxylic acid (Gln-23). A propeptide spans 23–71 (N-terminal propeptide); the sequence is QEVRRGPRGDKGPPGEQGPPGIPGRDGEDGLPGLPGPPGVPGLGGNFAA. A compositionally biased stretch (basic and acidic residues) spans 26–35; it reads RRGPRGDKGP. Positions 26 to 1111 are disordered; the sequence is RRGPRGDKGP…GDGGEYYRAD (1086 aa). Position 72 is a pyrrolidone carboxylic acid (Gln-72). Lys-77 bears the Allysine mark. The segment covering 99 to 108 has biased composition (low complexity); it reads PGSQGFQGLP. The span at 132 to 146 shows a compositional bias: basic and acidic residues; that stretch reads AGEDGHPGKSGRPGE. Position 168 is a 5-hydroxylysine; alternate (Lys-168). The O-linked (Gal...) hydroxylysine; alternate glycan is linked to Lys-168. A compositionally biased stretch (low complexity) spans 218–267; the sequence is PAGSAGSRGSDGSSGPVGPAGPIGSAGAPGLPGAPGAKGELGPAGNNGPT. Pro residues predominate over residues 276 to 290; sequence PGPPGSLGPAGPPGN. The segment covering 291-303 has biased composition (low complexity); the sequence is PGTNGVNGAKGTA. Positions 304–322 are enriched in gly residues; it reads GLPGVGGAPGLPGGRGIPG. Residues 327–336 are compositionally biased toward low complexity; that stretch reads AGPSGARGLA. Composition is skewed to gly residues over residues 340–349 and 403–412; these read GIAGGKGDTG and GRAGGIGPAG. 2 stretches are compositionally biased toward low complexity: residues 413-426 and 465-495; these read SRGS…RGPN and EGRS…NGEP. 2 stretches are compositionally biased toward gly residues: residues 523 to 532 and 586 to 595; these read GPAGLGGATG and GESGGAGPHG. A compositionally biased stretch (low complexity) spans 596–618; that stretch reads PSGSRGPSGAPGPDGQKGEPGAA. Positions 619–628 are enriched in gly residues; it reads GLNGGLGPSG. Low complexity-rich tracts occupy residues 659–675, 687–701, and 708–726; these read NPGR…AGAP, SGPA…PRGA, and AGPA…AGHT. Residues 728-738 are compositionally biased toward basic and acidic residues; that stretch reads AKGDRGAKGPK. Composition is skewed to low complexity over residues 741–767 and 776–788; these read AGSP…STGA and ATGF…RAGA. The span at 804–813 shows a compositional bias: basic and acidic residues; it reads PGKDGSRGPR. The span at 852 to 869 shows a compositional bias: low complexity; it reads AGPSGVLGARGILGLPGT. Over residues 874–883 the composition is skewed to gly residues; that stretch reads GLPGGPGSNG. Low complexity-rich tracts occupy residues 884-912 and 947-966; these read EPGP…VGHS and PSGL…AGKS. Gly residues predominate over residues 967–976; that stretch reads GNRGEGGPSG. Over residues 996-1014 the composition is skewed to basic and acidic residues; that stretch reads RGDKGEAGERGARGLDGRK. The span at 1019–1041 shows a compositional bias: low complexity; the sequence is LSGLPGPSGTPGETGPSGSVGPV. Residues 1080–1091 show a composition bias toward pro residues; the sequence is AGPPGPPGPPGH. Residues 1093-1105 show a composition bias toward gly residues; that stretch reads GPSGGGYDGGDGG. Positions 1111–1355 are cleaved as a propeptide — C-terminal propeptide; it reads DQPERKPKDY…GFEIGPVCFK (245 aa). In terms of domain architecture, Fibrillar collagen NC1 spans 1120 to 1355; sequence YEVDATLKSL…GFEIGPVCFK (236 aa). Disulfide bonds link Cys-1150-Cys-1182, Cys-1190-Cys-1353, and Cys-1261-Cys-1306. The Ca(2+) site is built by Asp-1168, Asn-1170, Gln-1171, Cys-1173, and Asp-1176. N-linked (GlcNAc...) asparagine glycans are attached at residues Asn-1206 and Asn-1256.

This sequence belongs to the fibrillar collagen family. As to quaternary structure, trimers of one alpha 2(I) and two alpha 1(I) chains. Prolines at the third position of the tripeptide repeating unit (G-X-Y) are hydroxylated in some or all of the chains. Forms the fibrils of tendon, ligaments and bones. In bones the fibrils are mineralized with calcium hydroxyapatite.

Its subcellular location is the secreted. The protein resides in the extracellular space. The protein localises to the extracellular matrix. In terms of biological role, type I collagen is a member of group I collagen (fibrillar forming collagen). The protein is Collagen alpha-2(I) chain (COL1A2) of Aquarana catesbeiana (American bullfrog).